The sequence spans 352 residues: ATPase GET3 (352 aa).

Residue 26–33 (KGGVGKTT) participates in ATP binding. Residue D57 is part of the active site. Residues E243 and N270 each coordinate ATP. Residues C283 and C286 each coordinate Zn(2+).

Belongs to the arsA ATPase family. Homodimer. Component of the Golgi to ER traffic (GET) complex, which is composed of GET1, GET2 and GET3. Within the complex, GET1 and GET2 form a heterotetramer which is stabilized by phosphatidylinositol binding and which binds to the GET3 homodimer. Interacts with the chloride channel protein GEF1.

Its subcellular location is the cytoplasm. It is found in the endoplasmic reticulum. It localises to the golgi apparatus. Functionally, ATPase required for the post-translational delivery of tail-anchored (TA) proteins to the endoplasmic reticulum. Recognizes and selectively binds the transmembrane domain of TA proteins in the cytosol. This complex then targets to the endoplasmic reticulum by membrane-bound receptors GET1 and GET2, where the tail-anchored protein is released for insertion. This process is regulated by ATP binding and hydrolysis. ATP binding drives the homodimer towards the closed dimer state, facilitating recognition of newly synthesized TA membrane proteins. ATP hydrolysis is required for insertion. Subsequently, the homodimer reverts towards the open dimer state, lowering its affinity for the GET1-GET2 receptor, and returning it to the cytosol to initiate a new round of targeting. Cooperates with the HDEL receptor ERD2 to mediate the ATP-dependent retrieval of resident ER proteins that contain a C-terminal H-D-E-L retention signal from the Golgi to the ER. Involved in low-level resistance to the oxyanions arsenite and arsenate, and in heat tolerance. The chain is ATPase GET3 from Vanderwaltozyma polyspora (strain ATCC 22028 / DSM 70294 / BCRC 21397 / CBS 2163 / NBRC 10782 / NRRL Y-8283 / UCD 57-17) (Kluyveromyces polysporus).